The sequence spans 792 residues: Putative cellulose synthase-like protein H3 (792 aa).

2 helical membrane passes run 25 to 45 (AWML…VRRA) and 55 to 75 (VGGA…FVWL). Positions 132 to 154 (GRHVRDDGGPGARAAGGDGEQGA) are disordered. The segment covering 140–151 (GPGARAAGGDGE) has biased composition (gly residues). Residues Asp-181 and Asp-501 contribute to the active site. The next 6 helical transmembrane spans lie at 579 to 599 (VWAV…YCLL), 613 to 632 (FNIT…VEYM), 650 to 670 (IISA…TIGL), 706 to 726 (VFIP…IGTW), 739 to 759 (GPGI…LPFV), and 768 to 788 (YGIP…FLFC).

This sequence belongs to the glycosyltransferase 2 family. Plant cellulose synthase-like H subfamily.

It localises to the golgi apparatus membrane. In terms of biological role, thought to be a Golgi-localized beta-glycan synthase that polymerize the backbones of noncellulosic polysaccharides (hemicelluloses) of plant cell wall. This chain is Putative cellulose synthase-like protein H3 (CSLH3), found in Oryza sativa subsp. japonica (Rice).